We begin with the raw amino-acid sequence, 483 residues long: Cobyric acid synthase (483 aa).

The region spanning 251-438 (ALIVAVPMLP…LHGVFSADRF (188 aa)) is the GATase cobBQ-type domain. Cys-333 (nucleophile) is an active-site residue. His-430 is an active-site residue.

It belongs to the CobB/CobQ family. CobQ subfamily.

It functions in the pathway cofactor biosynthesis; adenosylcobalamin biosynthesis. Functionally, catalyzes amidations at positions B, D, E, and G on adenosylcobyrinic A,C-diamide. NH(2) groups are provided by glutamine, and one molecule of ATP is hydrogenolyzed for each amidation. The polypeptide is Cobyric acid synthase (Brucella suis (strain ATCC 23445 / NCTC 10510)).